The following is a 623-amino-acid chain: DNA mismatch repair protein MutL (623 aa).

Positions 353 to 368 (AQQSAPRPANSYSPAS) are enriched in polar residues. The disordered stretch occupies residues 353-389 (AQQSAPRPANSYSPASWRTAPPAPRSEWSPQTAQTAH).

Belongs to the DNA mismatch repair MutL/HexB family.

Its function is as follows. This protein is involved in the repair of mismatches in DNA. It is required for dam-dependent methyl-directed DNA mismatch repair. May act as a 'molecular matchmaker', a protein that promotes the formation of a stable complex between two or more DNA-binding proteins in an ATP-dependent manner without itself being part of a final effector complex. The chain is DNA mismatch repair protein MutL from Brucella melitensis biotype 2 (strain ATCC 23457).